The chain runs to 367 residues: Protein-glutamate methylesterase/protein-glutamine glutaminase 2 (367 aa).

Positions 3 to 120 (SVVVVDDSAF…SLDIVRIEND (118 aa)) constitute a Response regulatory domain. Position 54 is a 4-aspartylphosphate (Asp-54). Residues 132–174 (RMLRTPRPVRPAPTASAPAQTAQVASAAPATAPSRPAMPATRA) form a disordered region. Positions 143-174 (APTASAPAQTAQVASAAPATAPSRPAMPATRA) are enriched in low complexity. The CheB-type methylesterase domain maps to 175–367 (SRPVRDVVAI…AAAIMNGLYK (193 aa)). Residues Ser-187, His-214, and Asp-310 contribute to the active site.

The protein belongs to the CheB family. In terms of processing, phosphorylated by CheA. Phosphorylation of the N-terminal regulatory domain activates the methylesterase activity.

It localises to the cytoplasm. It carries out the reaction [protein]-L-glutamate 5-O-methyl ester + H2O = L-glutamyl-[protein] + methanol + H(+). The catalysed reaction is L-glutaminyl-[protein] + H2O = L-glutamyl-[protein] + NH4(+). Involved in chemotaxis. Part of a chemotaxis signal transduction system that modulates chemotaxis in response to various stimuli. Catalyzes the demethylation of specific methylglutamate residues introduced into the chemoreceptors (methyl-accepting chemotaxis proteins or MCP) by CheR. Also mediates the irreversible deamidation of specific glutamine residues to glutamic acid. This chain is Protein-glutamate methylesterase/protein-glutamine glutaminase 2, found in Nitratidesulfovibrio vulgaris (strain ATCC 29579 / DSM 644 / CCUG 34227 / NCIMB 8303 / VKM B-1760 / Hildenborough) (Desulfovibrio vulgaris).